A 234-amino-acid chain; its full sequence is ATP synthase subunit a 1 (234 aa).

A run of 6 helical transmembrane segments spans residues 29–49 (FLVH…VALL), 90–110 (LIAT…IPGF), 116–136 (NLNT…VVGV), 147–167 (FVGP…IGHL), 186–206 (IVLV…MMLM), and 207–227 (GILV…IYIA).

This sequence belongs to the ATPase A chain family. In terms of assembly, F-type ATPases have 2 components, CF(1) - the catalytic core - and CF(0) - the membrane proton channel. CF(1) has five subunits: alpha(3), beta(3), gamma(1), delta(1), epsilon(1). CF(0) has three main subunits: a(1), b(2) and c(9-12). The alpha and beta chains form an alternating ring which encloses part of the gamma chain. CF(1) is attached to CF(0) by a central stalk formed by the gamma and epsilon chains, while a peripheral stalk is formed by the delta and b chains.

It is found in the cell inner membrane. Functionally, key component of the proton channel; it plays a direct role in the translocation of protons across the membrane. This chain is ATP synthase subunit a 1, found in Syntrophotalea carbinolica (strain DSM 2380 / NBRC 103641 / GraBd1) (Pelobacter carbinolicus).